The primary structure comprises 172 residues: Adenine phosphoribosyltransferase (172 aa).

The protein belongs to the purine/pyrimidine phosphoribosyltransferase family. Homodimer.

The protein resides in the cytoplasm. It catalyses the reaction AMP + diphosphate = 5-phospho-alpha-D-ribose 1-diphosphate + adenine. It functions in the pathway purine metabolism; AMP biosynthesis via salvage pathway; AMP from adenine: step 1/1. Functionally, catalyzes a salvage reaction resulting in the formation of AMP, that is energically less costly than de novo synthesis. The polypeptide is Adenine phosphoribosyltransferase (Prochlorococcus marinus (strain MIT 9303)).